We begin with the raw amino-acid sequence, 293 residues long: MNKDLKGLYAALLVPFDENGQVNEQGLKQIAQNAIETEELDGLYVNGSSGENFLLNTEQKKQVFKVAKEAVGDKVKLIAQVGSLDLNEAIELGKYATELGYDALSAVTPFYYPFTFEEIRDYYFDIIEATQNNMIIYAIPDLTGVNISIEQFSELFNHEKIVGVKYTAPNFFLLERIRKAFPDKLILSGFDEMLVQATISGVDGAIGSTYNVNGRRARKIFDLARQGQIQEAYQLQHDSNDIIETVLSMGIYPTLKEILRHRGIDAGLPKRPFKPFNEAHRQTLDQLIAKYDL.

Positions 48 and 49 each coordinate aceneuramate. Catalysis depends on tyrosine 137, which acts as the Proton donor. Catalysis depends on lysine 165, which acts as the Schiff-base intermediate with substrate. Aceneuramate is bound by residues threonine 167, glycine 189, aspartate 191, glutamate 192, and serine 208.

It belongs to the DapA family. NanA subfamily. In terms of assembly, homotetramer.

It localises to the cytoplasm. The catalysed reaction is aceneuramate = aldehydo-N-acetyl-D-mannosamine + pyruvate. Its pathway is amino-sugar metabolism; N-acetylneuraminate degradation; D-fructose 6-phosphate from N-acetylneuraminate: step 1/5. Catalyzes the reversible aldol cleavage of N-acetylneuraminic acid (sialic acid; Neu5Ac) to form pyruvate and N-acetylmannosamine (ManNAc) via a Schiff base intermediate. The protein is N-acetylneuraminate lyase of Staphylococcus aureus (strain MRSA252).